The sequence spans 607 residues: MSAILSADDLNDFISPGVACIKPVETLPKNESSNSQNPYEVTTEDKVQPENLPPAQISLTDCLACSGCVTSAEAVLISLQSHAEVLNTLDAYPELPLTQNHNGPYTGSSDALDGESRIFVASVSPQVRASLAATYGISEKEATYMIDQFLSGPHGLRAGGKHGSGFSWVVDTNVMRDAILVLTADEVSETLKEPSARAISKDTLPKRPVLSSACPGWICYAEKTHPFVLPHLSRLKSPQALTGTFLKTVLSKALGVPPSRVWHLAIMPCFDKKLEASREELTDVSWSPLDGGVPLTESNKPVRDVDCVITTRELLTLASSRGISLPTLPLKSLAPSYTPHFPDETLNAFLFRKQNGSEQSMEAGTSGGYLHHVLKTFQAKNPGSEIVTQRGRNADVVEYSLMSPGGEPLMKAARYYGFRNIQNLVRKLKPARVSRLPGARVPAASAGGNRRQPISRNSASAGSGTDFAYVEVMACPGGCTNGGGQIRIEDAREASTSTQSVTAVENPSKPTPHEQRAWLARVDEAYFSAESDAEGEMDGQAQPLTIPEREARVHEAFEYWSNLMNIPLSKLVYTTYREVESDVGKPKDAPIDTTRVVELAGKIGGGW.

A [4Fe-4S] cluster-binding site is contributed by Cys-20. The segment at 28–47 (PKNESSNSQNPYEVTTEDKV) is disordered. Polar residues predominate over residues 29-40 (KNESSNSQNPYE). Residues Cys-62, Cys-65, Cys-68, Cys-214, and Cys-269 each coordinate [4Fe-4S] cluster. A disordered region spans residues 439-461 (ARVPAASAGGNRRQPISRNSASA). The span at 452-461 (QPISRNSASA) shows a compositional bias: polar residues. 2 residues coordinate [4Fe-4S] cluster: Cys-475 and Cys-479. The segment covering 494–505 (ASTSTQSVTAVE) has biased composition (polar residues). Residues 494–513 (ASTSTQSVTAVENPSKPTPH) form a disordered region.

It belongs to the NARF family.

Its function is as follows. Component of the cytosolic Fe/S protein assembly machinery. Required for maturation of extramitochondrial Fe/S proteins. May play a role in the transfer of pre-assembled Fe/S clusters to target apoproteins. The chain is Cytosolic Fe-S cluster assembly factor nar1 (nar1) from Aspergillus oryzae (strain ATCC 42149 / RIB 40) (Yellow koji mold).